Here is a 75-residue protein sequence, read N- to C-terminus: Small ribosomal subunit protein bS21 (75 aa).

The segment at 52–75 (RRARKLARKRAQREGLIGGRPGAR) is disordered. Basic residues predominate over residues 53–62 (RARKLARKRA).

It belongs to the bacterial ribosomal protein bS21 family.

This is Small ribosomal subunit protein bS21 from Brucella anthropi (strain ATCC 49188 / DSM 6882 / CCUG 24695 / JCM 21032 / LMG 3331 / NBRC 15819 / NCTC 12168 / Alc 37) (Ochrobactrum anthropi).